A 136-amino-acid polypeptide reads, in one-letter code: Large ribosomal subunit protein bL19 (136 aa).

Positions 1–23 (MEETVNNQETPETSEEETADEET) are disordered. Positions 12 to 23 (ETSEEETADEET) are enriched in acidic residues.

This sequence belongs to the bacterial ribosomal protein bL19 family.

In terms of biological role, this protein is located at the 30S-50S ribosomal subunit interface and may play a role in the structure and function of the aminoacyl-tRNA binding site. The chain is Large ribosomal subunit protein bL19 from Dehalococcoides mccartyi (strain ATCC BAA-2266 / KCTC 15142 / 195) (Dehalococcoides ethenogenes (strain 195)).